A 186-amino-acid chain; its full sequence is Methylamine dehydrogenase light chain (186 aa).

The tat-type signal signal peptide spans 1-57 (MKKNTGFDSGIEKLARKTASKTGRRSFIGKLGGFLVGSALLPLLPVDRRGRMNEAHA). Intrachain disulfides connect Cys78/Cys143, Cys84/Cys116, Cys91/Cys176, Cys93/Cys141, Cys101/Cys132, and Cys133/Cys164. Residue Trp112 is modified to Tryptophylquinone. A cross-link (tryptophan tryptophylquinone (Trp-Trp)) is located at residues 112 to 163 (WVASCFNPGDGQTYLIAYRDCCGKQTCGRCNCVNVQGELPVYRPEFNNDIVW).

It belongs to the aromatic amine dehydrogenase light chain family. In terms of assembly, heterotetramer of two light and two heavy chains. Tryptophan tryptophylquinone residue serves as cofactor. In terms of processing, predicted to be exported by the Tat system. The position of the signal peptide cleavage has not been experimentally proven. Tryptophan tryptophylquinone (TTQ) is formed by oxidation of the indole ring of a tryptophan to form tryptophylquinone followed by covalent cross-linking with another tryptophan residue.

Its subcellular location is the periplasm. It catalyses the reaction 2 oxidized [amicyanin] + methylamine + H2O = 2 reduced [amicyanin] + formaldehyde + NH4(+) + 2 H(+). The protein operates within one-carbon metabolism; methylamine degradation; formaldehyde from methylamine: step 1/1. Functionally, methylamine dehydrogenase carries out the oxidation of methylamine. Electrons are passed from methylamine dehydrogenase to amicyanin. The chain is Methylamine dehydrogenase light chain (mauA) from Methylobacillus flagellatus (strain ATCC 51484 / DSM 6875 / VKM B-1610 / KT).